The sequence spans 111 residues: Ribonuclease P protein component (111 aa).

Belongs to the RnpA family. As to quaternary structure, consists of a catalytic RNA component (M1 or rnpB) and a protein subunit.

It catalyses the reaction Endonucleolytic cleavage of RNA, removing 5'-extranucleotides from tRNA precursor.. Its function is as follows. RNaseP catalyzes the removal of the 5'-leader sequence from pre-tRNA to produce the mature 5'-terminus. It can also cleave other RNA substrates such as 4.5S RNA. The protein component plays an auxiliary but essential role in vivo by binding to the 5'-leader sequence and broadening the substrate specificity of the ribozyme. This chain is Ribonuclease P protein component, found in Borreliella afzelii (strain PKo) (Borrelia afzelii).